Here is a 360-residue protein sequence, read N- to C-terminus: UPF0283 membrane protein Oant_2119 (360 aa).

Residues 1-30 (MTEKTPRKPASFTVSQASNRPEAADEAPRR) form a disordered region. 2 consecutive transmembrane segments (helical) span residues 77–97 (ILFGALGILVSFAIGIWTEDL) and 108–128 (LGWTALGVAIIALAAFIAIVV).

The protein belongs to the UPF0283 family.

Its subcellular location is the cell inner membrane. This chain is UPF0283 membrane protein Oant_2119, found in Brucella anthropi (strain ATCC 49188 / DSM 6882 / CCUG 24695 / JCM 21032 / LMG 3331 / NBRC 15819 / NCTC 12168 / Alc 37) (Ochrobactrum anthropi).